The primary structure comprises 343 residues: GDSL esterase/lipase EXL6 (343 aa).

Positions 1–21 (MFRGKIFVLSLFSIYVLSSAA) are cleaved as a signal peptide. An N-linked (GlcNAc...) asparagine glycan is attached at N24. Residue S36 is the Nucleophile of the active site. Residues D318 and H321 contribute to the active site.

The protein belongs to the 'GDSL' lipolytic enzyme family. In terms of tissue distribution, flower buds and pollen.

Its subcellular location is the secreted. It is found in the extracellular space. It localises to the extracellular matrix. The protein resides in the pollen coat. Required for the formation of pollen coats and male fertility. In Arabidopsis thaliana (Mouse-ear cress), this protein is GDSL esterase/lipase EXL6 (EXL6).